The primary structure comprises 40 residues: Photosystem II reaction center protein J (40 aa).

The helical transmembrane segment at 8 to 28 (IPLWLISTVTGTLVIGLMGIF) threads the bilayer.

This sequence belongs to the PsbJ family. PSII is composed of 1 copy each of membrane proteins PsbA, PsbB, PsbC, PsbD, PsbE, PsbF, PsbH, PsbI, PsbJ, PsbK, PsbL, PsbM, PsbT, PsbX, PsbY, PsbZ, Psb30/Ycf12, at least 3 peripheral proteins of the oxygen-evolving complex and a large number of cofactors. It forms dimeric complexes.

It localises to the plastid. Its subcellular location is the chloroplast thylakoid membrane. Functionally, one of the components of the core complex of photosystem II (PSII). PSII is a light-driven water:plastoquinone oxidoreductase that uses light energy to abstract electrons from H(2)O, generating O(2) and a proton gradient subsequently used for ATP formation. It consists of a core antenna complex that captures photons, and an electron transfer chain that converts photonic excitation into a charge separation. The protein is Photosystem II reaction center protein J of Ginkgo biloba (Ginkgo).